The primary structure comprises 319 residues: MKILAIESSCDEFSISIIDNNKILTNIISSQIKDHQVFGGVVPELAARLHVQNFNWVLKAALSQSNLNIEEIDYIAYTKSPGLIGSLIIGKLVAETISLYINKPILALDHIQGHIFGASIENEFIYPVLAMVVSGGHTQIEIINSANDFQIIGSTRDDAIGECYDKVARVLGLSYPGGPILDKLALKGNKDFYSLPVLKDDNTYDFSYSGLKTACINLIHNLNQKKQEINLENFAASFQYTATNIIEKKLEKAIKEFKPKTLTVAGGVSANSEIRKIILKLGQKYNIKNTFVPKMSYCTDNAAMIAKLAYEKILLKNKL.

H110 and H114 together coordinate Fe cation. Residues 132–136, D165, G178, D182, and N271 contribute to the substrate site; that span reads VVSGG. D300 provides a ligand contact to Fe cation.

It belongs to the KAE1 / TsaD family. The cofactor is Fe(2+).

It is found in the cytoplasm. It catalyses the reaction L-threonylcarbamoyladenylate + adenosine(37) in tRNA = N(6)-L-threonylcarbamoyladenosine(37) in tRNA + AMP + H(+). Its function is as follows. Required for the formation of a threonylcarbamoyl group on adenosine at position 37 (t(6)A37) in tRNAs that read codons beginning with adenine. Is involved in the transfer of the threonylcarbamoyl moiety of threonylcarbamoyl-AMP (TC-AMP) to the N6 group of A37, together with TsaE and TsaB. TsaD likely plays a direct catalytic role in this reaction. In Mycoplasma capricolum subsp. capricolum (strain California kid / ATCC 27343 / NCTC 10154), this protein is tRNA N6-adenosine threonylcarbamoyltransferase.